A 411-amino-acid polypeptide reads, in one-letter code: Phosphoglycerate kinase (411 aa).

Residues 28 to 30, arginine 45, 68 to 71, arginine 125, and arginine 165 each bind substrate; these read DIN and HQSR. ATP is bound by residues glutamate 338 and 364–367; that span reads GGHL.

It belongs to the phosphoglycerate kinase family. Homodimer.

It is found in the cytoplasm. It carries out the reaction (2R)-3-phosphoglycerate + ATP = (2R)-3-phospho-glyceroyl phosphate + ADP. It functions in the pathway carbohydrate degradation; glycolysis; pyruvate from D-glyceraldehyde 3-phosphate: step 2/5. The protein is Phosphoglycerate kinase (pgk) of Methanothermobacter thermautotrophicus (strain ATCC 29096 / DSM 1053 / JCM 10044 / NBRC 100330 / Delta H) (Methanobacterium thermoautotrophicum).